The primary structure comprises 208 residues: Imidazoleglycerol-phosphate dehydratase (208 aa).

A disordered region spans residues 1 to 22; sequence MTRRAAVKAPRAGAAARRGSVA. Residues 7 to 19 are compositionally biased toward low complexity; sequence VKAPRAGAAARRG.

The protein belongs to the imidazoleglycerol-phosphate dehydratase family.

It localises to the cytoplasm. The catalysed reaction is D-erythro-1-(imidazol-4-yl)glycerol 3-phosphate = 3-(imidazol-4-yl)-2-oxopropyl phosphate + H2O. It functions in the pathway amino-acid biosynthesis; L-histidine biosynthesis; L-histidine from 5-phospho-alpha-D-ribose 1-diphosphate: step 6/9. This Anaeromyxobacter dehalogenans (strain 2CP-C) protein is Imidazoleglycerol-phosphate dehydratase.